The chain runs to 78 residues: Large ribosomal subunit protein bL28 (78 aa).

Belongs to the bacterial ribosomal protein bL28 family.

The protein is Large ribosomal subunit protein bL28 of Haemophilus influenzae (strain 86-028NP).